Consider the following 596-residue polypeptide: M-phase inducer phosphatase (596 aa).

A phosphoserine mark is found at Ser99 and Ser178. The disordered stretch occupies residues 174–221; sequence LSSSSFDSYLRPNVSRSRSSGNAPPFLRSRSSSSYSINKKKGTSGGQA. The region spanning 429–533 is the Rhodanese domain; sequence IFDKCIIIDC…FYENHKNRCD (105 aa). The Phosphocysteine intermediate role is filled by Cys480.

Belongs to the MPI phosphatase family. As to quaternary structure, interacts with rad24 during G2 in a srk1-dependent manner; the interaction is increased during osmostress. In terms of processing, phosphorylated by srk1 in the N-terminus; phosphorylation promotes nuclear exclusion.

Its subcellular location is the cytoplasm. The protein localises to the nucleus. The catalysed reaction is O-phospho-L-tyrosyl-[protein] + H2O = L-tyrosyl-[protein] + phosphate. Functionally, tyrosine protein phosphatase which functions as a dosage-dependent inducer of mitotic and meiotic progression. Directly dephosphorylates cdc2 and stimulates its kinase activity. Required for the G2/M transition of the cell cycle. Required for induction of meiosis II. This chain is M-phase inducer phosphatase, found in Schizosaccharomyces pombe (strain 972 / ATCC 24843) (Fission yeast).